The primary structure comprises 249 residues: Putative nicotinamide mononucleotide adenylyltransferase (249 aa).

Residues S40 and F41 each coordinate NAD(+). H48 serves as a coordination point for ATP. Positions 97, 129, 131, 165, and 206 each coordinate NAD(+). 214–217 serves as a coordination point for ATP; that stretch reads TRAR.

It belongs to the eukaryotic NMN adenylyltransferase family. POF1 subfamily.

The protein localises to the cytoplasm. It localises to the nucleus. The enzyme catalyses beta-nicotinamide D-ribonucleotide + ATP + H(+) = diphosphate + NAD(+). Its pathway is cofactor biosynthesis; NAD(+) biosynthesis; NAD(+) from nicotinamide D-ribonucleotide: step 1/1. Catalyzes the formation of NAD(+) from nicotinamide mononucleotide (NMN) and ATP. Involved in the salvage pathway for NAD(+) biosynthesis via NMN. The chain is Putative nicotinamide mononucleotide adenylyltransferase from Schizosaccharomyces pombe (strain 972 / ATCC 24843) (Fission yeast).